Here is a 71-residue protein sequence, read N- to C-terminus: Gas vesicle protein A (71 aa).

An alpha helix 1 region spans residues 12-22; sequence LAEVIDRILDK. Positions 26 to 34 are beta-strand 1; that stretch reads IDAWARVSL. The interval 35 to 37 is beta turn; that stretch reads VGI. The beta-strand 2 stretch occupies residues 38–46; sequence ELLAIEARV. An alpha helix 2 region spans residues 51 to 70; it reads VETYLKYAEAVGLTQXAXXA.

It belongs to the gas vesicle GvpA family. In terms of assembly, the gas vesicle shell is 2 nm thick and consists of a single layer of this protein. It forms helical ribs nearly perpendicular to the long axis of the vesicle.

Its subcellular location is the gas vesicle shell. Gas vesicles are hollow, gas filled proteinaceous nanostructures found in some microorganisms. During planktonic growth they allow positioning of the organism at a favorable depth for light or nutrient acquisition. GvpA forms the protein shell. The sequence is that of Gas vesicle protein A from Microcystis sp. (strain BC 84/1).